The sequence spans 872 residues: Lysosomal cholesterol signaling protein (872 aa).

The Lumenal segment spans residues 1–40; that stretch reads MNSFSNLPAENLTIAVNMTKTLPTAVMHGFNSTNDPPSMS. The PIN-like transporter stretch occupies residues 3-372; that stretch reads SFSNLPAENL…SAWLLTFPTM (370 aa). N-linked (GlcNAc...) asparagine glycosylation is found at Asn11, Asn17, and Asn31. A helical membrane pass occupies residues 41-61; that stretch reads ITRLFPALLECFGIVLCGYIA. Cholesterol contacts are provided by Phe45 and Tyr59. The Cytoplasmic portion of the chain corresponds to 62–81; that stretch reads GRANVITSTQAKGLGNFVSR. A helical membrane pass occupies residues 82–102; sequence FALPALLFKNMVVLNFSNVDW. Residues 103-106 lie on the Lumenal side of the membrane; the sequence is SFLY. Residues 107–127 traverse the membrane as a helical segment; sequence SILIAKASVFFIVCVLTLLVA. Over 128–135 the chain is Cytoplasmic; the sequence is SPDSRFSK. The discontinuously helical transmembrane segment at 136-156 threads the bilayer; that stretch reads AGLFPIFATQSNDFALGYPIV. The Lumenal segment spans residues 157–169; the sequence is EALYQTTYPEYLQ. A helical membrane pass occupies residues 170–190; it reads YIYLVAPISLMMLNPIGFIFC. Topologically, residues 191–215 are cytoplasmic; the sequence is EIQKWKDTQNASQNKIKIVGLGLLR. The discontinuously helical transmembrane segment at 216 to 236 threads the bilayer; it reads VLQNPIVFMVFIGIAFNFILD. Topologically, residues 237–245 are lumenal; it reads RKVPVYVEN. Residues 246–266 form a discontinuously helical membrane-spanning segment; sequence FLDGLGNSFSGSALFYLGLTM. The Cytoplasmic portion of the chain corresponds to 267–275; sequence VGKIKRLKK. Positions 268, 269, and 270 each coordinate cholesterol. Residues 276–296 form a helical membrane-spanning segment; the sequence is SAFVVLILLITAKLLVLPLLC. Residues 297 to 317 lie on the Lumenal side of the membrane; it reads REMVELLDKGDSVVNHTSLSN. Asn311 carries N-linked (GlcNAc...) asparagine glycosylation. Residues 318–338 traverse the membrane as a discontinuously helical segment; sequence YAFLYGVFPVAPGVAIFATQF. At 339–348 the chain is on the cytoplasmic side; it reads NMEVEIITSG. The helical transmembrane segment at 349-369 threads the bilayer; that stretch reads MVISTFVSAPIMYVSAWLLTF. The Lumenal segment spans residues 370-383; that stretch reads PTMDPKPLAYAIQN. Residues 382-719 form a GPCR region; it reads QNVSFDISIV…FGIFGLDKHL (338 aa). A glycan (N-linked (GlcNAc...) asparagine) is linked at Asn383. Residues 384 to 404 traverse the membrane as a helical segment; the sequence is VSFDISIVSLISLIWSQAILL. The Cytoplasmic segment spans residues 405–416; that stretch reads LSKKYKQLPHML. A helical membrane pass occupies residues 417 to 437; that stretch reads TTNLLIAQSIVCAGMMIWNFV. Residues 438–440 are Lumenal-facing; the sequence is KEK. Residues 441–461 form a helical membrane-spanning segment; that stretch reads NFVGQILVFVLLYSSLYSTYL. Residues 462-482 are Cytoplasmic-facing; the sequence is WTGLLAISLFLLKKRERVQIP. The chain crosses the membrane as a helical span at residues 483–503; that stretch reads VGIIIISGWGIPALLVGVLLI. At 504 to 522 the chain is on the lumenal side; that stretch reads TGKHSGDSIDSAFFYGKEQ. The chain crosses the membrane as a helical span at residues 523–543; the sequence is MITTAVTLFCSILIAGISLMC. Over 544-662 the chain is Cytoplasmic; that stretch reads MNRTAQAGSY…GDQQLTRHVL (119 aa). Arg659 contributes to the cholesterol binding site. Residues 663 to 683 traverse the membrane as a helical segment; it reads LCLLLIIGLFANLSSCLWWLF. At 684-693 the chain is on the lumenal side; sequence NQEPGRLYVE. Residues 694 to 714 traverse the membrane as a helical segment; it reads LQFFCAVFNFGQGFISFGIFG. Residues 715–872 lie on the Cytoplasmic side of the membrane; sequence LDKHLIILPF…SSPPSHSPKT (158 aa). Positions 759–837 constitute a DEP domain; that stretch reads YHRDLCIRNI…DEYLFYRFLQ (79 aa).

In terms of assembly, homodimer; via the transporter region and DEP domain. Interacts with the GATOR1 complex; preventing interaction between GATOR1 and KICSTOR; interaction is disrupted upon cholesterol starvation.

It is found in the lysosome membrane. Cholesterol-binding protein that acts as a regulator of mTORC1 signaling pathway. Acts as a sensor of cholesterol to signal cholesterol sufficiency to mTORC1: in presence of cholesterol, binds cholesterol, leading to disruption of the interaction between the GATOR1 and KICSTOR complexes and promotion of mTORC1 signaling. Upon cholesterol starvation, GPR155/LYCHOS is unable to perturb the association between GATOR1 and KICSTOR, leading to mTORC1 signaling inhibition. Binds indole-3-acetic acid and may play a role in tryptophan metabolism. In Pongo abelii (Sumatran orangutan), this protein is Lysosomal cholesterol signaling protein (GPR155).